Consider the following 319-residue polypeptide: Replication factor C small subunit (319 aa).

Residue 45 to 52 coordinates ATP; the sequence is GPPGTGKT.

This sequence belongs to the activator 1 small subunits family. RfcS subfamily. Heteropentamer composed of four small subunits (RfcS) and one large subunit (RfcL). Both subunits interact with PCNA.

Its function is as follows. Part of the RFC clamp loader complex which loads the PCNA sliding clamp onto DNA. The complex possesses DNA-dependent ATPase activity which is further stimulated by PCNA. This is Replication factor C small subunit (rfcS) from Archaeoglobus fulgidus (strain ATCC 49558 / DSM 4304 / JCM 9628 / NBRC 100126 / VC-16).